Consider the following 188-residue polypeptide: Probable manganese efflux pump MntP (188 aa).

Transmembrane regions (helical) follow at residues 3–23 (FTATVLLAFGMSMDAFAASIG), 41–61 (LIFGAVETLTPLIGWGLGILA), 66–86 (LEWNHWIAFVLLIFLGGRMII), 106–128 (WLLVTTAIATSLDAMAVGVGLAF), 143–163 (ATLIMSTLGMMIGRFIGPMLG), and 168–188 (ILGGVVLIGIGVQILWTHFHG).

It belongs to the MntP (TC 9.B.29) family.

The protein localises to the cell inner membrane. In terms of biological role, probably functions as a manganese efflux pump. The polypeptide is Probable manganese efflux pump MntP (Salmonella typhimurium (strain LT2 / SGSC1412 / ATCC 700720)).